Here is a 236-residue protein sequence, read N- to C-terminus: 2,3,4,5-tetrahydropyridine-2,6-dicarboxylate N-acetyltransferase (236 aa).

It belongs to the transferase hexapeptide repeat family. DapH subfamily.

It catalyses the reaction (S)-2,3,4,5-tetrahydrodipicolinate + acetyl-CoA + H2O = L-2-acetamido-6-oxoheptanedioate + CoA. Its pathway is amino-acid biosynthesis; L-lysine biosynthesis via DAP pathway; LL-2,6-diaminopimelate from (S)-tetrahydrodipicolinate (acetylase route): step 1/3. Functionally, catalyzes the transfer of an acetyl group from acetyl-CoA to tetrahydrodipicolinate. The sequence is that of 2,3,4,5-tetrahydropyridine-2,6-dicarboxylate N-acetyltransferase from Clostridium botulinum (strain 657 / Type Ba4).